The chain runs to 573 residues: Probable CoA ligase CCL13 (573 aa).

ATP is bound by residues 216 to 224, 352 to 357, Asp449, 461 to 464, and Lys556; these read TSGTTARPK, HIYGLT, and LKDR. Positions 284–352 are SBD1; the sequence is SPKAIFDNIH…MEEMGFQVNH (69 aa). The segment at 353-429 is SBD2; sequence IYGLTETHGP…FRGNTVMSGY (77 aa).

This sequence belongs to the ATP-dependent AMP-binding enzyme family.

The protein localises to the cytoplasm. The protein resides in the cytosol. The chain is Probable CoA ligase CCL13 from Humulus lupulus (European hop).